We begin with the raw amino-acid sequence, 583 residues long: Laccase-14 (583 aa).

The first 30 residues, 1–30 (MAPSLGSGSTRILLIVSLLLCLRQQAVVDA), serve as a signal peptide directing secretion. 2 consecutive Plastocyanin-like domains span residues 38-158 (HVGN…PRPG) and 168-320 (AEHT…YDDD). N-linked (GlcNAc...) asparagine glycans are attached at residues Asn41 and Asn84. Cu cation contacts are provided by His88 and His90. An N-linked (GlcNAc...) asparagine glycan is attached at Asn126. Positions 137 and 139 each coordinate Cu cation. N-linked (GlcNAc...) asparagine glycosylation is found at Asn179, Asn251, Asn304, Asn338, Asn388, Asn400, Asn446, and Asn464. The Plastocyanin-like 3 domain occupies 426 to 567 (DFPDRPPVMF…AMAFDVQDGP (142 aa)). Residues His482, His485, His487, His546, Cys547, His548, and His552 each contribute to the Cu cation site.

Belongs to the multicopper oxidase family. Cu cation is required as a cofactor.

It localises to the secreted. It is found in the extracellular space. The protein localises to the apoplast. It carries out the reaction 4 hydroquinone + O2 = 4 benzosemiquinone + 2 H2O. Functionally, lignin degradation and detoxification of lignin-derived products. The sequence is that of Laccase-14 (LAC14) from Oryza sativa subsp. japonica (Rice).